A 439-amino-acid polypeptide reads, in one-letter code: MAESPAFLSAKDEGSFAYLTIKDRTPQILTKVIDTLHRHKSEFFEKHGEEGIEAEKKAISLLSKLRNELQTDKPITPLVDKCVDTHIWNQYLEYQRSLLNEGDGEPRWFFSPWLFVECYMYRRIHEAIMQSPPIHDFDVFKESKEENFFESQGSIDALCSHLLQLKPVKGLREEQIQDEFFKLLQISLWGNKCDLSLSGGESSSQKANIINCLQDLKPFILINDTESLWALLSKLKKTVETPVVRVDIVLDNSGFELITDLVLADFLFSSELATEIHFHGKSIPWFVSDVTEHDFNWIVEHMKSSNLESMSTCGACWEAYARMGRWAYHDHAFWTLPHPYCVMPQVAPDLYAELQKAHLILFKGDLNYRKLMGDRKWKFTFPFHQALSGFHPAPLCSIRTLKCELQVGLQPGQAEQLTASDPHWLTTGRYGILQFDGPL.

A2 carries the N-acetylalanine modification. S4 is modified (phosphoserine). The residue at position 40 (K40) is an N6-acetyllysine. Positions 251 and 252 each coordinate Mn(2+). 251-252 contributes to the substrate binding site; that stretch reads DN. S-adenosyl-L-methionine contacts are provided by E256 and D289. D289 serves as a coordination point for Mn(2+). Substrate-binding positions include 365 to 369 and K402; that span reads DLNYR. The short motif at 399–402 is the Subfamily III RTxK motif element; sequence RTLK.

This sequence belongs to the damage-control phosphatase family. Sugar phosphate phosphatase III subfamily. Mn(2+) serves as cofactor. The cofactor is Ni(2+). Automethylated.

It catalyses the reaction beta-D-fructose 1-phosphate + H2O = D-fructose + phosphate. The catalysed reaction is beta-D-fructose 6-phosphate = dihydroxyacetone + D-glyceraldehyde 3-phosphate. It carries out the reaction L-glutamyl-[protein] + S-adenosyl-L-methionine = [protein]-L-glutamate 5-O-methyl ester + S-adenosyl-L-homocysteine. Functionally, metal-dependent phosphatase that shows phosphatase activity against several substrates, including fructose-1-phosphate and fructose-6-phosphate. Its preference for fructose-1-phosphate, a strong glycating agent that causes DNA damage rather than a canonical yeast metabolite, suggests a damage-control function in hexose phosphate metabolism. Has also been shown to have O-methyltransferase activity that methylates glutamate residues of target proteins to form gamma-glutamyl methyl ester residues. Possibly methylates PCNA, suggesting it is involved in the DNA damage response. This is Damage-control phosphatase ARMT1 from Mus musculus (Mouse).